The sequence spans 746 residues: NAD(P)H-quinone oxidoreductase subunit 5, chloroplastic (746 aa).

The next 15 helical transmembrane spans lie at 9-29, 40-60, 89-109, 122-139, 147-167, 185-205, 219-239, 258-278, 280-300, 327-347, 396-416, 425-445, 546-566, 605-625, and 722-742; these read WIIP…LLLV, WTFP…NLSI, IDPL…MVLI, LRFF…LGLV, IYIF…FWFT, GDFG…SFEF, NGVN…GAVA, TPIS…FLVA, LLPL…IGVI, LGYI…FHLI, TTFL…CFWS, WLYS…TAFY, LLPL…GIPF, IYSV…YGSI, and YLFV…FYFF.

It belongs to the complex I subunit 5 family. As to quaternary structure, NDH is composed of at least 16 different subunits, 5 of which are encoded in the nucleus.

The protein localises to the plastid. Its subcellular location is the chloroplast thylakoid membrane. The catalysed reaction is a plastoquinone + NADH + (n+1) H(+)(in) = a plastoquinol + NAD(+) + n H(+)(out). It catalyses the reaction a plastoquinone + NADPH + (n+1) H(+)(in) = a plastoquinol + NADP(+) + n H(+)(out). In terms of biological role, NDH shuttles electrons from NAD(P)H:plastoquinone, via FMN and iron-sulfur (Fe-S) centers, to quinones in the photosynthetic chain and possibly in a chloroplast respiratory chain. The immediate electron acceptor for the enzyme in this species is believed to be plastoquinone. Couples the redox reaction to proton translocation, and thus conserves the redox energy in a proton gradient. The sequence is that of NAD(P)H-quinone oxidoreductase subunit 5, chloroplastic (ndhF) from Calycanthus floridus var. glaucus (Eastern sweetshrub).